The sequence spans 101 residues: Small ribosomal subunit protein uS14A (101 aa).

Positions 28–57 are disordered; that stretch reads KDIIRSPSSAPEQRSTAQRALARQPRDASP. Polar residues predominate over residues 33 to 45; sequence SPSSAPEQRSTAQ.

It belongs to the universal ribosomal protein uS14 family. Part of the 30S ribosomal subunit. Contacts proteins S3 and S10.

Functionally, binds 16S rRNA, required for the assembly of 30S particles and may also be responsible for determining the conformation of the 16S rRNA at the A site. The protein is Small ribosomal subunit protein uS14A of Mycobacterium bovis (strain ATCC BAA-935 / AF2122/97).